A 156-amino-acid polypeptide reads, in one-letter code: Endoribonuclease YbeY (156 aa).

Zn(2+) contacts are provided by His122, His126, and His132.

Belongs to the endoribonuclease YbeY family. Zn(2+) is required as a cofactor.

It is found in the cytoplasm. Its function is as follows. Single strand-specific metallo-endoribonuclease involved in late-stage 70S ribosome quality control and in maturation of the 3' terminus of the 16S rRNA. In Bacillus cereus (strain G9842), this protein is Endoribonuclease YbeY.